A 157-amino-acid polypeptide reads, in one-letter code: Small ribosomal subunit protein uS7 (157 aa).

This sequence belongs to the universal ribosomal protein uS7 family. In terms of assembly, part of the 30S ribosomal subunit. Contacts proteins S9 and S11.

In terms of biological role, one of the primary rRNA binding proteins, it binds directly to 16S rRNA where it nucleates assembly of the head domain of the 30S subunit. Is located at the subunit interface close to the decoding center, probably blocks exit of the E-site tRNA. The sequence is that of Small ribosomal subunit protein uS7 from Borrelia hermsii (strain HS1 / DAH).